A 421-amino-acid chain; its full sequence is 3-hydroxy-3-methylglutaryl-coenzyme A reductase (421 aa).

Residues E109, K240, and D315 each act as charge relay system in the active site. Catalysis depends on H410, which acts as the Proton donor.

Belongs to the HMG-CoA reductase family.

It carries out the reaction (R)-mevalonate + 2 NADP(+) + CoA = (3S)-3-hydroxy-3-methylglutaryl-CoA + 2 NADPH + 2 H(+). The protein operates within metabolic intermediate biosynthesis; (R)-mevalonate biosynthesis; (R)-mevalonate from acetyl-CoA: step 3/3. Its function is as follows. Converts HMG-CoA to mevalonate. In Aeropyrum pernix (strain ATCC 700893 / DSM 11879 / JCM 9820 / NBRC 100138 / K1), this protein is 3-hydroxy-3-methylglutaryl-coenzyme A reductase (hmgA).